A 204-amino-acid chain; its full sequence is Thymidine kinase (204 aa).

ATP contacts are provided by residues 15–22 (GSMFSGKS) and 88–91 (DEVQ). E89 acts as the Proton acceptor in catalysis. The Zn(2+) site is built by C145, C148, C183, and C186.

It belongs to the thymidine kinase family. Homotetramer.

The protein resides in the cytoplasm. The enzyme catalyses thymidine + ATP = dTMP + ADP + H(+). The sequence is that of Thymidine kinase from Halalkalibacterium halodurans (strain ATCC BAA-125 / DSM 18197 / FERM 7344 / JCM 9153 / C-125) (Bacillus halodurans).